The primary structure comprises 435 residues: Keratin, type I cytoskeletal 18 (435 aa).

A compositionally biased stretch (low complexity) spans 1–28 (MSLRSSYSVRSSTSQVPVSQMSQMSQMS). Residues 1-36 (MSLRSSYSVRSSTSQVPVSQMSQMSQMSIKRTTNVP) form a disordered region. The head stretch occupies residues 2 to 88 (SLRSSYSVRS…TGATGDIMGN (87 aa)). The segment at 89–123 (EKMAMQNLNDRLASYLRSETLEQANSKLELKIREA) is coil 1A. An IF rod domain is found at 89 to 399 (EKMAMQNLND…RLLDGGDFKL (311 aa)). Residues 124–140 (LEKKGPEVCDYSRFQPI) are linker 1. Residues 141-232 (IDDLRRKIFD…KNHDNEVMEL (92 aa)) form a coil 1B region. A linker 12 region spans residues 233–256 (RNQISHSGVQVDVDAPKGQDLAKI). A coil 2 region spans residues 257–394 (MEEIRSKYEK…IATYRRLLDG (138 aa)). Residues 395 to 435 (GDFKLQDALEEQKRVKVMTVTQTLVDGKVVSSSTETKEKKF) are tail.

This sequence belongs to the intermediate filament family. Heterotetramer of two type I and two type II keratins. Keratin-18 associates with keratin-8. Phosphorylated. In terms of processing, proteolytically cleaved by caspases during epithelial cell apoptosis. Abundantly expressed in an even distribution throughout the optic nerve, localizing specifically to the astrocyte domains. Moderately expressed in spinal cord, brain, liver and oocytes.

When phosphorylated, plays a role in filament reorganization. The chain is Keratin, type I cytoskeletal 18 (krt18) from Carassius auratus (Goldfish).